The following is a 797-amino-acid chain: Mitochondrial inner membrane m-AAA protease component AFG3L2 (797 aa).

The N-terminal 38 residues, 1 to 38 (MAHRCLRLWGRGGCWPRGLQQLLVPGGVGPGEQPCLRT), are a transit peptide targeting the mitochondrion. Positions 39-66 (LYRFVTTQARASRNSLLTDIIAAYQRFC) are cleaved as a propeptide — removed in mature form. The Mitochondrial matrix segment spans residues 39 to 142 (LYRFVTTQAR…KGDIPWDDKD (104 aa)). The segment at 76-126 (YFPNGKNGKKASEPKEVMGEKKESKPAATTRSSGGGGGGGGKRGGKKDDSH) is disordered. Residues 85-100 (KASEPKEVMGEKKESK) are compositionally biased toward basic and acidic residues. Residues 108–117 (SGGGGGGGGK) show a composition bias toward gly residues. N6-succinyllysine is present on lysine 117. The chain crosses the membrane as a helical span at residues 143-163 (FRMFFLWTALFWGGVMFYLLL). Over 164–250 (KRSGREITWK…VPVVYIAESD (87 aa)) the chain is Mitochondrial intermembrane. A helical transmembrane segment spans residues 251 to 271 (GSFLLSMLPTVLIIAFLLYTI). Topologically, residues 272 to 797 (RRGPAGIGRT…EEPPGEKVAN (526 aa)) are mitochondrial matrix. Valine 310, alanine 311, threonine 352, glycine 353, lysine 354, threonine 355, leucine 356, and histidine 490 together coordinate ATP. A Zn(2+)-binding site is contributed by histidine 574. The active site involves glutamate 575. 2 residues coordinate Zn(2+): histidine 578 and aspartate 649. A disordered region spans residues 759–797 (FVEGTGSLDEDTSLPEGLKDWNKEREKEKEEPPGEKVAN). Residues 775–797 (GLKDWNKEREKEKEEPPGEKVAN) show a composition bias toward basic and acidic residues.

This sequence in the N-terminal section; belongs to the AAA ATPase family. The protein in the C-terminal section; belongs to the peptidase M41 family. Homohexamer. Forms heterohexamers with SPG7. The m-AAA protease is either composed of homohexamers of AFG3L2 or heterohexamers of AFG3L2 and SPG7. Interacts with MAIP1. Interacts with DNAJC19. Interacts with PHB2. Zn(2+) is required as a cofactor. In terms of processing, upon import into the mitochondrion, the N-terminal transit peptide is cleaved to generate an intermediate form which undergoes autocatalytic proteolytic processing to generate the proteolytically active mature form. As to expression, ubiquitous. Highly expressed in the cerebellar Purkinje cells.

It localises to the mitochondrion inner membrane. The catalysed reaction is ATP + H2O = ADP + phosphate + H(+). Functionally, catalytic component of the m-AAA protease, a protease that plays a key role in proteostasis of inner mitochondrial membrane proteins, and which is essential for axonal and neuron development. AFG3L2 possesses both ATPase and protease activities: the ATPase activity is required to unfold substrates, threading them into the internal proteolytic cavity for hydrolysis into small peptide fragments. The m-AAA protease carries out quality control in the inner membrane of the mitochondria by mediating degradation of mistranslated or misfolded polypeptides. The m-AAA protease complex also promotes the processing and maturation of mitochondrial proteins, such as MRPL32/bL32m, PINK1 and SP7. Mediates protein maturation of the mitochondrial ribosomal subunit MRPL32/bL32m by catalyzing the cleavage of the presequence of MRPL32/bL32m prior to assembly into the mitochondrial ribosome. Required for SPG7 maturation into its active mature form after SPG7 cleavage by mitochondrial-processing peptidase (MPP). Required for the maturation of PINK1 into its 52kDa mature form after its cleavage by mitochondrial-processing peptidase (MPP). Acts as a regulator of calcium in neurons by mediating degradation of SMDT1/EMRE before its assembly with the uniporter complex, limiting the availability of SMDT1/EMRE for MCU assembly and promoting efficient assembly of gatekeeper subunits with MCU. Promotes the proteolytic degradation of GHITM upon hyperpolarization of mitochondria: progressive GHITM degradation leads to respiratory complex I degradation and broad reshaping of the mitochondrial proteome by AFG3L2. Also acts as a regulator of mitochondrial glutathione homeostasis by mediating cleavage and degradation of SLC25A39. SLC25A39 cleavage is prevented when SLC25A39 binds iron-sulfur. Involved in the regulation of OMA1-dependent processing of OPA1. May act by mediating processing of OMA1 precursor, participating in OMA1 maturation. This chain is Mitochondrial inner membrane m-AAA protease component AFG3L2, found in Homo sapiens (Human).